The following is a 451-amino-acid chain: G-protein coupled receptor 61 (451 aa).

Over residues Met1–Ser14 the composition is skewed to low complexity. The segment at Met1–Val31 is disordered. The Extracellular segment spans residues Met1–Val44. An N-linked (GlcNAc...) asparagine glycan is attached at Asn12. Residues Ala45–Ile67 form a helical membrane-spanning segment. Topologically, residues Ala68–Lys75 are cytoplasmic. A helical membrane pass occupies residues Phe76–Met98. Over Leu99–Glu112 the chain is Extracellular. The helical transmembrane segment at Val113–Ala135 threads the bilayer. Residues Ile136–Thr155 lie on the Cytoplasmic side of the membrane. Residues Leu156 to Val178 traverse the membrane as a helical segment. At Leu179–Gln206 the chain is on the extracellular side. A helical transmembrane segment spans residues Leu207–Cys229. At Ser230–Val287 the chain is on the cytoplasmic side. Residues Val288–Val310 form a helical membrane-spanning segment. Residues Ala311–Ser324 lie on the Extracellular side of the membrane. The helical transmembrane segment at Val325–Leu344 threads the bilayer. Topologically, residues Asn345 to Ser451 are cytoplasmic.

The protein belongs to the G-protein coupled receptor 1 family. As to quaternary structure, forms heterodimer with MTNR1B. Interacts with ARRB1 and ARRB2 in a spontaneous and agonist-independent manner; leading to the internalization of GPR61 in the endosomal compartment. As to expression, expressed in brain; detected in frontal and temporal lobes, occipital pole, amygdala and hippocampus. Also expressed in testis and T cells, B cells, and monocyte. Low expression in many other tissues. Widely expressed in the hippocampus (at protein level).

It localises to the cell membrane. The protein localises to the endosome membrane. Orphan G-protein coupled receptor. Constitutively activates the G(s)-alpha/cAMP signaling pathway. Shows a reciprocal regulatory interaction with the melatonin receptor MTNR1B most likely through receptor heteromerization. May be involved in the regulation of food intake and body weight. This is G-protein coupled receptor 61 (GPR61) from Homo sapiens (Human).